A 509-amino-acid polypeptide reads, in one-letter code: Glutamyl-tRNA(Gln) amidotransferase subunit A (509 aa).

Catalysis depends on charge relay system residues Lys75 and Ser150. The active-site Acyl-ester intermediate is the Ser174. The interval 471 to 509 (DWHKRRPPLGQPPLEQAQGTAQQPKAKSKSTKGSKKSKS) is disordered. Basic residues predominate over residues 496 to 509 (AKSKSTKGSKKSKS).

It belongs to the amidase family. GatA subfamily. In terms of assembly, heterotrimer of A, B and C subunits.

It catalyses the reaction L-glutamyl-tRNA(Gln) + L-glutamine + ATP + H2O = L-glutaminyl-tRNA(Gln) + L-glutamate + ADP + phosphate + H(+). In terms of biological role, allows the formation of correctly charged Gln-tRNA(Gln) through the transamidation of misacylated Glu-tRNA(Gln) in organisms which lack glutaminyl-tRNA synthetase. The reaction takes place in the presence of glutamine and ATP through an activated gamma-phospho-Glu-tRNA(Gln). The polypeptide is Glutamyl-tRNA(Gln) amidotransferase subunit A (Synechococcus sp. (strain JA-3-3Ab) (Cyanobacteria bacterium Yellowstone A-Prime)).